A 415-amino-acid chain; its full sequence is Probable beta-1,4-xylosyltransferase IRX10L (415 aa).

A topological domain (cytoplasmic) is located at residue Met-1. Residues 2-22 (KLSSCVLIFLLCNTFSSISAF) traverse the membrane as a helical; Signal-anchor for type II membrane protein segment. Topologically, residues 23-415 (RLSRSQPTER…AGPVADLKPW (393 aa)) are lumenal. Residues Asn-142 and Asn-403 are each glycosylated (N-linked (GlcNAc...) asparagine).

This sequence belongs to the glycosyltransferase 47 family. In terms of tissue distribution, present in the xylem and phloem, and, to a lower extent, in interfascicular cells. Expressed in the root tip, shoot apical meristem (SAM), xylem cells of roots and stems, and in the vasculature of roots, cotyledons and leaves.

It localises to the golgi apparatus membrane. Its function is as follows. Involved in the synthesis of the hemicellulose glucuronoxylan, a major component of secondary cell walls. Probably involved in the elongation of glucuronoxylan xylosyl backbone. The sequence is that of Probable beta-1,4-xylosyltransferase IRX10L (IRX10L) from Arabidopsis thaliana (Mouse-ear cress).